Here is a 553-residue protein sequence, read N- to C-terminus: MDDIVNSVPSWMFTAIIAVCILFIIGIIFARLYRRASAEQAFVRTGLGGQKVVMSGGAIVMPIFHEIIPINMNTLKLEVSRSTIDSLITKDRMRVDVVVAFFVRVKPSVEGIATAAQTLGQRTLSPEDLRMLVEDKFVDALRATAAQMTMHELQDTRENFVQGVQNTVAEDLSKNGLELESVSLTNFNQTSKEHFNPNNAFDAEGLTKLTQETERRRRERNEVEQDVEVAVREKNRDALSRKLEIEQQEAFMTLEQEQQVKTRTAEQNARIAAFEAERRREAEQTRILAERQIQETEIDREQAVRSRKVEAEREVRIKEIEQQQVTEIANQTKSIAIAAKSEQQSQAEARANLALAEAVSAQQNVETTRQTAEADRAKQVALIAAAQDAETKAVELTVRAKAEKEAAEMQAAAIVELAEATRKKGLAEAEAQRALNDAINVLSDEQTSLKFKLALLQALPAVIEKSVEPMKSIDGIKIIQVDGLNRGGAAGDANTGNVGGGNLAEQALSAALSYRTQAPLIDSLLNEIGVSGGSLAALTSPLTSTTPVEEKAE.

Residues 1-9 (MDDIVNSVP) are Periplasmic-facing. Residues 10-30 (SWMFTAIIAVCILFIIGIIFA) form a helical membrane-spanning segment. Residues 31 to 553 (RLYRRASAEQ…STTPVEEKAE (523 aa)) lie on the Cytoplasmic side of the membrane.

This sequence belongs to the band 7/mec-2 family. Flotillin subfamily. As to quaternary structure, homooligomerizes.

The protein resides in the cell inner membrane. It is found in the membrane raft. Functionally, found in membrane microdomains that may be equivalent to eukaryotic membrane rafts. FMMs are highly dynamic and increase in number as cells age. Flotillins are thought to be important factors in membrane fluidity. The polypeptide is Flotillin family inner membrane protein YqiK (yqiK) (Escherichia coli (strain K12)).